The following is a 275-amino-acid chain: Autophagy protein 5 (275 aa).

N-acetylmethionine is present on methionine 1. Residue lysine 130 forms a Glycyl lysine isopeptide (Lys-Gly) (interchain with G-Cter in ATG12) linkage.

This sequence belongs to the ATG5 family. In terms of assembly, forms a conjugate with ATG12. Part of the minor complex composed of 4 sets of ATG12-ATG5 and ATG16L1 (400 kDa); this complex interacts with ATG3 leading to disruption of ATG7 interaction and promotion of ATG8-like proteins lipidation. Forms an 800-kDa complex composed of ATG12-ATG5 and ATG16L2. The ATG12-ATG5 conjugate interacts with RAB33A; this interaction is bridged by ATG16L1 and promotes ATG12-ATG5-ATG16L1 complex recruitment to phagophores. Interacts with TECPR1; the interaction is direct and does not take place when ATG16L1 is associated with the ATG5-ATG12 conjugate. Interacts with DHX58/RIG-1, IFIH1/MDA5 and MAVS/IPS-1 in monomeric form as well as in ATG12-ATG5 conjugate form. The interaction with MAVS is further enhanced upon vesicular stomatitis virus (VSV) infection. Interacts with ATG3. Interacts with ATG7 and ATG10. Interacts with FADD. Interacts with Bassoon/BSN; this interaction is important for the regulation of presynaptic autophagy. Interacts with ATG16L2. Post-translationally, conjugated to ATG12; which is essential for autophagy, but is not required for association with isolation membrane. In terms of processing, acetylated by EP300.

Its subcellular location is the cytoplasm. The protein resides in the preautophagosomal structure membrane. In terms of biological role, involved in autophagic vesicle formation. Conjugation with ATG12, through a ubiquitin-like conjugating system involving ATG7 as an E1-like activating enzyme and ATG10 as an E2-like conjugating enzyme, is essential for its function. The ATG12-ATG5 conjugate acts as an E3-like enzyme which is required for lipidation of ATG8 family proteins and their association to the vesicle membranes. Involved in mitochondrial quality control after oxidative damage, and in subsequent cellular longevity. Plays a critical role in multiple aspects of lymphocyte development and is essential for both B and T lymphocyte survival and proliferation. Required for optimal processing and presentation of antigens for MHC II. Involved in the maintenance of axon morphology and membrane structures, as well as in normal adipocyte differentiation. Promotes primary ciliogenesis through removal of OFD1 from centriolar satellites and degradation of IFT20 via the autophagic pathway. As part of the ATG8 conjugation system with ATG12 and ATG16L1, required for recruitment of LRRK2 to stressed lysosomes and induction of LRRK2 kinase activity in response to lysosomal stress. Functionally, may play an important role in the apoptotic process, possibly within the modified cytoskeleton. Its expression is a relatively late event in the apoptotic process, occurring downstream of caspase activity. Plays a crucial role in IFN-gamma-induced autophagic cell death by interacting with FADD. This is Autophagy protein 5 from Sus scrofa (Pig).